A 1061-amino-acid chain; its full sequence is Lysine-specific demethylase jmjd-3.1 (1061 aa).

2 disordered regions span residues 30–49 (VKNSQETPPFPGMNSTMRPV) and 256–417 (KSLS…KRRT). The segment covering 271 to 287 (QHTNSVGSSIGTTSGDS) has biased composition (polar residues). Over residues 310–320 (STSSEFTETTS) the composition is skewed to low complexity. Residues 321–330 (VANQTESNAG) are compositionally biased toward polar residues. Residues 369–417 (KKKEQSATEPPIPRTKRAYTKNPNTIRKRRMKKNQSDDEEDDGPPKRRT) are required for nuclear localization. The interval 418–759 (INYQIEFRDA…FGTNIDLLSE (342 aa)) is required for binding of unc-3 and for function in Y-to-PDA transdifferentiation. Positions 760–923 (NFKKQMNEIE…LATSIVAHDH (164 aa)) constitute a JmjC domain. Residues His-811, Glu-813, and His-891 each coordinate Fe cation. Zn(2+) contacts are provided by Cys-998, Cys-1001, Cys-1025, and Cys-1028.

The protein belongs to the UTX family. Interacts with wdr-5.1 and unc-3. It depends on Fe(2+) as a cofactor. As to expression, mainly expressed in head and tail.

The protein resides in the nucleus. Functionally, histone demethylase that specifically demethylates trimethylated 'Lys-27' of histone H3, a mark associated with transcriptional repression, thereby playing a central role in the histone code. Involved in the transcriptional regulation of the heat shock response, unfolded protein response and possibly other stress response target genes. Required for gonad development and organization. Required for the robust transdifferentiation of the Y rectal epithelial cell to the PDA motor neuron during larval development. Acts cell-autonomously in Y-to-PDA transdifferentiation, which depends on the demethylase activity and on recognition of the H3 tail. Cooperates with set-2 and unc-3 to ensure robust Y-to-PDA transdifferentiation. Promotes mitochondrial stress-induced longevity. Involved in lifespan regulation. The polypeptide is Lysine-specific demethylase jmjd-3.1 (Caenorhabditis elegans).